A 901-amino-acid polypeptide reads, in one-letter code: MutS protein homolog 5 (901 aa).

643 to 650 is an ATP binding site; that stretch reads GANASGKS.

It belongs to the DNA mismatch repair MutS family. As to quaternary structure, heterooligomer of MSH4 and MSH5.

In terms of biological role, involved in meiotic recombination. Facilitate crossovers between homologs during meiosis. This is MutS protein homolog 5 (MSH5) from Saccharomyces cerevisiae (strain ATCC 204508 / S288c) (Baker's yeast).